The chain runs to 93 residues: Small ribosomal subunit protein bS20 (93 aa).

Residues 1–11 (MPQHKSAEKRV) show a composition bias toward basic and acidic residues. The disordered stretch occupies residues 1-23 (MPQHKSAEKRVRQSKRRNARNRV). Over residues 12–23 (RQSKRRNARNRV) the composition is skewed to basic residues.

It belongs to the bacterial ribosomal protein bS20 family.

Binds directly to 16S ribosomal RNA. The polypeptide is Small ribosomal subunit protein bS20 (Chloroherpeton thalassium (strain ATCC 35110 / GB-78)).